A 261-amino-acid chain; its full sequence is Glucosamine-6-phosphate deaminase (261 aa).

Aspartate 67 serves as the catalytic Proton acceptor; for enolization step. The active-site For ring-opening step is asparagine 136. The active-site Proton acceptor; for ring-opening step is histidine 138. The active-site For ring-opening step is the glutamate 143.

It belongs to the glucosamine/galactosamine-6-phosphate isomerase family. NagB subfamily.

The enzyme catalyses alpha-D-glucosamine 6-phosphate + H2O = beta-D-fructose 6-phosphate + NH4(+). It functions in the pathway amino-sugar metabolism; N-acetylneuraminate degradation; D-fructose 6-phosphate from N-acetylneuraminate: step 5/5. Functionally, catalyzes the reversible isomerization-deamination of glucosamine 6-phosphate (GlcN6P) to form fructose 6-phosphate (Fru6P) and ammonium ion. This Cutibacterium acnes (strain DSM 16379 / KPA171202) (Propionibacterium acnes) protein is Glucosamine-6-phosphate deaminase.